We begin with the raw amino-acid sequence, 238 residues long: MSKVSKAYREAAAKVDRDNKYTPLQAAKLAKATSSKNYDATIDVAIRLGVDPRKADQLVRGTVALPNGTGKDVRVVVFAEGPNATAAEEAGADFVGSAELIEKIQGGWTDFDAAIATPDQMAKVGRVARVLGPRGLMPNPKTGTVTTDVAKAVSEIKGGKISFRVDKASNLHALIGKASFDEKKLAENYGALIDELLRIKPSSSKGKYIKKVTLSSTNGPGVPVDETIQKNYADDAEA.

The interval 217–238 (TNGPGVPVDETIQKNYADDAEA) is disordered.

It belongs to the universal ribosomal protein uL1 family. As to quaternary structure, part of the 50S ribosomal subunit.

In terms of biological role, binds directly to 23S rRNA. The L1 stalk is quite mobile in the ribosome, and is involved in E site tRNA release. Its function is as follows. Protein L1 is also a translational repressor protein, it controls the translation of the L11 operon by binding to its mRNA. This Corynebacterium urealyticum (strain ATCC 43042 / DSM 7109) protein is Large ribosomal subunit protein uL1.